We begin with the raw amino-acid sequence, 578 residues long: Potassium-transporting ATPase potassium-binding subunit (578 aa).

A run of 10 helical transmembrane segments spans residues 3–23 (NAILQYSLYLIILVLLAIPLG), 65–85 (SFSVLAFSAVGFIFLFALNLL), 134–154 (GLTVQNFLSAGVGIAVLFALI), 175–195 (IVLYLLVPLSIVLSILLVSQG), 261–281 (FSNLLEMLSILLIPAALCFTF), 293–313 (AIFIAMFTLLIIALCIIGVSE), 397–417 (GLYGMIAFAIITVFIAGLMVG), 435–455 (AMLICLATPISILIGSALASI), 503–523 (IGLIMLFVRFVPMIATLAIAG), and 543–563 (LLFIGLLIFVVLLVGALSFFP).

It belongs to the KdpA family. The system is composed of three essential subunits: KdpA, KdpB and KdpC.

It localises to the cell membrane. In terms of biological role, part of the high-affinity ATP-driven potassium transport (or Kdp) system, which catalyzes the hydrolysis of ATP coupled with the electrogenic transport of potassium into the cytoplasm. This subunit binds the extracellular potassium ions and delivers the ions to the membrane domain of KdpB through an intramembrane tunnel. The protein is Potassium-transporting ATPase potassium-binding subunit of Clostridium perfringens (strain ATCC 13124 / DSM 756 / JCM 1290 / NCIMB 6125 / NCTC 8237 / Type A).